The following is a 61-amino-acid chain: Large ribosomal subunit protein eL20 (61 aa).

It belongs to the eukaryotic ribosomal protein eL20 family. Part of the 50S ribosomal subunit. Binds 23S rRNA.

In Methanosarcina mazei (strain ATCC BAA-159 / DSM 3647 / Goe1 / Go1 / JCM 11833 / OCM 88) (Methanosarcina frisia), this protein is Large ribosomal subunit protein eL20.